The following is a 174-amino-acid chain: Adenylate kinase (174 aa).

Residues 12-41 (STGDMLRAAIKAGTPLGLEAKKIIDEGGLV) form an NMP region. Residues Thr13, Arg18, 39–41 (GLV), 67–70 (GFPR), and Gln74 contribute to the AMP site. The interval 104–141 (GRRVHLASGRTYHIAYNPPKVEGKDDVTGEDLIQRDDD) is LID. ATP contacts are provided by residues Arg105 and 114 to 115 (TY). 2 residues coordinate AMP: Arg138 and Arg149.

This sequence belongs to the adenylate kinase family. In terms of assembly, monomer.

It is found in the cytoplasm. The enzyme catalyses AMP + ATP = 2 ADP. Its pathway is purine metabolism; AMP biosynthesis via salvage pathway; AMP from ADP: step 1/1. In terms of biological role, catalyzes the reversible transfer of the terminal phosphate group between ATP and AMP. Plays an important role in cellular energy homeostasis and in adenine nucleotide metabolism. The protein is Adenylate kinase of Neisseria animalis.